The following is a 141-amino-acid chain: Protein NrdI (141 aa).

The protein belongs to the NrdI family.

In terms of biological role, probably involved in ribonucleotide reductase function. This Wigglesworthia glossinidia brevipalpis protein is Protein NrdI.